Here is a 277-residue protein sequence, read N- to C-terminus: Putative pyruvate, phosphate dikinase regulatory protein (277 aa).

151–158 contributes to the ADP binding site; that stretch reads GISRTSKT.

Belongs to the pyruvate, phosphate/water dikinase regulatory protein family. PDRP subfamily.

It catalyses the reaction N(tele)-phospho-L-histidyl/L-threonyl-[pyruvate, phosphate dikinase] + ADP = N(tele)-phospho-L-histidyl/O-phospho-L-threonyl-[pyruvate, phosphate dikinase] + AMP + H(+). It carries out the reaction N(tele)-phospho-L-histidyl/O-phospho-L-threonyl-[pyruvate, phosphate dikinase] + phosphate + H(+) = N(tele)-phospho-L-histidyl/L-threonyl-[pyruvate, phosphate dikinase] + diphosphate. Bifunctional serine/threonine kinase and phosphorylase involved in the regulation of the pyruvate, phosphate dikinase (PPDK) by catalyzing its phosphorylation/dephosphorylation. The polypeptide is Putative pyruvate, phosphate dikinase regulatory protein (Alkaliphilus oremlandii (strain OhILAs) (Clostridium oremlandii (strain OhILAs))).